A 411-amino-acid chain; its full sequence is Alpha-N-acetylgalactosaminidase (411 aa).

The first 17 residues, 1 to 17, serve as a signal peptide directing secretion; the sequence is MLLKTVLLLGHVAQVLM. Disulfide bonds link C38–C80 and C42–C49. 78-79 contributes to the substrate binding site; the sequence is DD. N124 carries N-linked (GlcNAc...) asparagine glycosylation. A disulfide bridge links C127 with C158. K154 contributes to the substrate binding site. The active-site Nucleophile is the D156. The N-linked (GlcNAc...) asparagine glycan is linked to N177. C187 and C209 are joined by a disulfide. S188 provides a ligand contact to substrate. Residue N201 is glycosylated (N-linked (GlcNAc...) asparagine). Substrate is bound by residues R213 and D217. D217 serves as the catalytic Proton donor. 2 positions are modified to phosphoserine: S322 and S332. 2 N-linked (GlcNAc...) asparagine glycosylation sites follow: N359 and N385.

It belongs to the glycosyl hydrolase 27 family. In terms of assembly, homodimer.

The protein localises to the lysosome. It catalyses the reaction Cleavage of non-reducing alpha-(1-&gt;3)-N-acetylgalactosamine residues from human blood group A and AB mucin glycoproteins, Forssman hapten and blood group A lacto series glycolipids.. The catalysed reaction is a neolactoside IV(3)-alpha-GalNAc,IV(2)-alpha-Fuc-nLc4Cer(d18:1(4E)) + H2O = a neolactoside IV(2)-alpha-Fuc-nLc4Cer(d18:1(4E)) + N-acetyl-alpha-D-galactosamine. The enzyme catalyses a neolactoside IV(3)-alpha-GalNAc,IV(2)-alpha-Fuc-nLc4Cer(d18:0) + H2O = a neolactoside IV(2)-alpha-Fuc-nLc4Cer(d18:0) + N-acetyl-alpha-D-galactosamine. It carries out the reaction a globoside IV3GalNAc-Gb4Cer + H2O = N-acetyl-alpha-D-galactosamine + a globoside Gb4Cer. In terms of biological role, removes terminal alpha-N-acetylgalactosamine residues from glycolipids and glycopeptides. Required for the breakdown of glycolipids. The chain is Alpha-N-acetylgalactosaminidase from Homo sapiens (Human).